The sequence spans 298 residues: 33 kDa chaperonin (298 aa).

Cystine bridges form between cysteine 237–cysteine 239 and cysteine 270–cysteine 273.

Belongs to the HSP33 family. Under oxidizing conditions two disulfide bonds are formed involving the reactive cysteines. Under reducing conditions zinc is bound to the reactive cysteines and the protein is inactive.

The protein resides in the cytoplasm. Redox regulated molecular chaperone. Protects both thermally unfolding and oxidatively damaged proteins from irreversible aggregation. Plays an important role in the bacterial defense system toward oxidative stress. The polypeptide is 33 kDa chaperonin (Enterococcus faecalis (strain ATCC 700802 / V583)).